We begin with the raw amino-acid sequence, 99 residues long: uncharacterized protein (99 aa).

This is an uncharacterized protein from Salmonella typhimurium (strain LT2 / SGSC1412 / ATCC 700720).